The chain runs to 73 residues: Venom protein 55.1 (73 aa).

The signal sequence occupies residues Met1 to Cys19. Pro57 is modified (proline amide). The propeptide occupies Arg61 to Lys73.

The protein belongs to the diuretic hormone class 2 family. As to expression, expressed by the venom gland.

It is found in the secreted. Regulates fluid secretion. The polypeptide is Venom protein 55.1 (Lychas mucronatus (Chinese swimming scorpion)).